The following is a 395-amino-acid chain: Flap endonuclease 1 (395 aa).

The tract at residues 1-108 is N-domain; sequence MGILGLSKLL…DELEMRRQKA (108 aa). Mg(2+) is bound at residue Asp-34. Arg-74 contributes to the DNA binding site. Mg(2+) is bound by residues Asp-90, Glu-162, Glu-164, Asp-183, and Asp-185. The tract at residues 126–257 is I-domain; sequence MMEKMSKRTV…QKAWEGIQRY (132 aa). Glu-162 is a binding site for DNA. DNA-binding residues include Gly-235 and Asp-237. Residue Asp-237 participates in Mg(2+) binding. The tract at residues 340–348 is interaction with PCNA; it reads TQGRLDSFF.

This sequence belongs to the XPG/RAD2 endonuclease family. FEN1 subfamily. As to quaternary structure, interacts with PCNA. Three molecules of FEN1 bind to one PCNA trimer with each molecule binding to one PCNA monomer. PCNA stimulates the nuclease activity without altering cleavage specificity. Mg(2+) serves as cofactor. Post-translationally, phosphorylated. Phosphorylation upon DNA damage induces relocalization to the nuclear plasma.

The protein localises to the nucleus. It localises to the nucleolus. The protein resides in the nucleoplasm. It is found in the mitochondrion. In terms of biological role, structure-specific nuclease with 5'-flap endonuclease and 5'-3' exonuclease activities involved in DNA replication and repair. During DNA replication, cleaves the 5'-overhanging flap structure that is generated by displacement synthesis when DNA polymerase encounters the 5'-end of a downstream Okazaki fragment. It enters the flap from the 5'-end and then tracks to cleave the flap base, leaving a nick for ligation. Also involved in the long patch base excision repair (LP-BER) pathway, by cleaving within the apurinic/apyrimidinic (AP) site-terminated flap. Acts as a genome stabilization factor that prevents flaps from equilibrating into structures that lead to duplications and deletions. Also possesses 5'-3' exonuclease activity on nicked or gapped double-stranded DNA, and exhibits RNase H activity. Also involved in replication and repair of rDNA and in repairing mitochondrial DNA. The chain is Flap endonuclease 1 from Leishmania infantum.